The sequence spans 396 residues: Acyl-[acyl-carrier-protein] desaturase, chloroplastic (396 aa).

The transit peptide at 1 to 33 directs the protein to the chloroplast; that stretch reads MALKFHPLTSQSPKLPSFRMPQLASLRSPKFVM. E138, E176, H179, E229, E262, and H265 together coordinate Fe cation.

This sequence belongs to the fatty acid desaturase type 2 family. As to quaternary structure, homodimer. Fe(2+) is required as a cofactor.

Its subcellular location is the plastid. The protein resides in the chloroplast. The protein operates within lipid metabolism; fatty acid metabolism. Its function is as follows. Introduces a cis double bond in the acyl chain of an acyl-[acyl-carrier protein]. The chain is Acyl-[acyl-carrier-protein] desaturase, chloroplastic from Cucumis sativus (Cucumber).